Consider the following 181-residue polypeptide: TATA-box-binding protein (181 aa).

2 repeat units span residues 7–83 and 98–173.

It belongs to the TBP family.

Its function is as follows. General factor that plays a role in the activation of archaeal genes transcribed by RNA polymerase. Binds specifically to the TATA box promoter element which lies close to the position of transcription initiation. This is TATA-box-binding protein from Methanococcus maripaludis (strain C6 / ATCC BAA-1332).